Reading from the N-terminus, the 120-residue chain is cAMP-responsive element-binding protein-like 2 (120 aa).

The interval 1 to 24 (MDDSKVVGGKVKKPGKRGRKPAKI) is disordered. Positions 10 to 21 (KVKKPGKRGRKP) are enriched in basic residues. A bZIP domain is found at 23–86 (KIDLKAKLER…MAMDQGKIPS (64 aa)). A basic motif region spans residues 29–60 (KLERSRQSARECRARKKLRYQYLEELVSSRER). Positions 62-69 (ICALREEL) are leucine-zipper. The interval 93–120 (TGEEQNKSQQNSSRHTKAGKTDANSNSW) is disordered.

This sequence belongs to the bZIP family. ATF subfamily. As to quaternary structure, interacts with CREB1; regulates CREB1 phosphorylation, stability and transcriptional activity. Phosphorylated by AMPK.

Its subcellular location is the nucleus. Its function is as follows. Probable regulator of CREB1 transcriptional activity which is involved in adipose cells differentiation. May also play a regulatory role in the cell cycle. Identification in a chromosomal region frequently deleted in various cancers suggests that it might act as a tumor suppressor. The sequence is that of cAMP-responsive element-binding protein-like 2 (CREBL2) from Homo sapiens (Human).